A 480-amino-acid polypeptide reads, in one-letter code: tRNA-2-methylthio-N(6)-dimethylallyladenosine synthase (480 aa).

Residues 25-145 (GVFYVHTLGC…LPQLLDQARI (121 aa)) form the MTTase N-terminal domain. Cys-34, Cys-74, Cys-108, Cys-182, Cys-186, and Cys-189 together coordinate [4Fe-4S] cluster. Positions 168–397 (RASKVSSWVA…VALQERITEE (230 aa)) constitute a Radical SAM core domain. Residues 400–470 (KTFEGRDVEV…RHNLIADPNP (71 aa)) enclose the TRAM domain.

It belongs to the methylthiotransferase family. MiaB subfamily. Monomer. The cofactor is [4Fe-4S] cluster.

Its subcellular location is the cytoplasm. The catalysed reaction is N(6)-dimethylallyladenosine(37) in tRNA + (sulfur carrier)-SH + AH2 + 2 S-adenosyl-L-methionine = 2-methylsulfanyl-N(6)-dimethylallyladenosine(37) in tRNA + (sulfur carrier)-H + 5'-deoxyadenosine + L-methionine + A + S-adenosyl-L-homocysteine + 2 H(+). Its function is as follows. Catalyzes the methylthiolation of N6-(dimethylallyl)adenosine (i(6)A), leading to the formation of 2-methylthio-N6-(dimethylallyl)adenosine (ms(2)i(6)A) at position 37 in tRNAs that read codons beginning with uridine. This is tRNA-2-methylthio-N(6)-dimethylallyladenosine synthase from Bifidobacterium adolescentis (strain ATCC 15703 / DSM 20083 / NCTC 11814 / E194a).